Here is a 234-residue protein sequence, read N- to C-terminus: Probable porphobilinogen deaminase (234 aa).

It belongs to the HMBS family.

It catalyses the reaction 4 porphobilinogen + H2O = hydroxymethylbilane + 4 NH4(+). The protein operates within porphyrin-containing compound metabolism; protoporphyrin-IX biosynthesis; coproporphyrinogen-III from 5-aminolevulinate: step 2/4. Its function is as follows. Tetrapolymerization of the monopyrrole PBG into the hydroxymethylbilane pre-uroporphyrinogen in several discrete steps. The polypeptide is Probable porphobilinogen deaminase (hemC) (Chlamydia pneumoniae (Chlamydophila pneumoniae)).